We begin with the raw amino-acid sequence, 140 residues long: Large ribosomal subunit protein bL17 (140 aa).

The protein belongs to the bacterial ribosomal protein bL17 family. Part of the 50S ribosomal subunit. Contacts protein L32.

The chain is Large ribosomal subunit protein bL17 from Rhizorhabdus wittichii (strain DSM 6014 / CCUG 31198 / JCM 15750 / NBRC 105917 / EY 4224 / RW1) (Sphingomonas wittichii).